The following is a 178-amino-acid chain: Peptide deformylase 2 (178 aa).

Positions 101 and 143 each coordinate Fe cation. Glu-144 is an active-site residue. Residue His-147 coordinates Fe cation.

This sequence belongs to the polypeptide deformylase family. Fe(2+) serves as cofactor.

The enzyme catalyses N-terminal N-formyl-L-methionyl-[peptide] + H2O = N-terminal L-methionyl-[peptide] + formate. Functionally, removes the formyl group from the N-terminal Met of newly synthesized proteins. Requires at least a dipeptide for an efficient rate of reaction. N-terminal L-methionine is a prerequisite for activity but the enzyme has broad specificity at other positions. This chain is Peptide deformylase 2, found in Pseudomonas putida (strain ATCC 47054 / DSM 6125 / CFBP 8728 / NCIMB 11950 / KT2440).